A 447-amino-acid chain; its full sequence is 1-aminocyclopropane-1-carboxylate synthase 7 (447 aa).

The substrate site is built by glutamate 61 and tyrosine 100. Lysine 285 carries the N6-(pyridoxal phosphate)lysine modification.

The protein belongs to the class-I pyridoxal-phosphate-dependent aminotransferase family. Homodimer and heterodimer. In vivo, the relevance of heterodimerization with other ACS enzymes is however unsure. Interacts with XBAT32. The cofactor is pyridoxal 5'-phosphate. Ubiquitinated by XBAT32. Ubiquitination probably leads to its subsequent degradation, thus controlling ethylene production. In terms of tissue distribution, expressed in roots.

It carries out the reaction S-adenosyl-L-methionine = 1-aminocyclopropane-1-carboxylate + S-methyl-5'-thioadenosine + H(+). It functions in the pathway alkene biosynthesis; ethylene biosynthesis via S-adenosyl-L-methionine; ethylene from S-adenosyl-L-methionine: step 1/2. Its function is as follows. 1-aminocyclopropane-1-carboxylate synthase (ACS) enzymes catalyze the conversion of S-adenosyl-L-methionine (SAM) into 1-aminocyclopropane-1-carboxylate (ACC), a direct precursor of ethylene. This is 1-aminocyclopropane-1-carboxylate synthase 7 (ACS7) from Arabidopsis thaliana (Mouse-ear cress).